A 314-amino-acid polypeptide reads, in one-letter code: Ketimine reductase mu-crystallin (314 aa).

R47 lines the 3,3',5-triiodo-L-thyronine pocket. NADPH contacts are provided by D82, H92, R119, A144, V146, Q147, N168, R169, T170, N173, T205, L206, V226, and A228. E257 contacts 3,3',5-triiodo-L-thyronine. Residue S292 participates in NADPH binding.

Belongs to the ornithine cyclodeaminase/mu-crystallin family. As to quaternary structure, homodimer. Binds the thyroid hormone triiodothyronine (T3); T3 binding inhibits enzymatic activity. Expressed in neural tissues, muscle and kidney. Expressed in the inner ear.

The protein resides in the cytoplasm. The catalysed reaction is L-pipecolate + NADP(+) = Delta(1)-piperideine-2-carboxylate + NADPH + H(+). It catalyses the reaction L-pipecolate + NAD(+) = Delta(1)-piperideine-2-carboxylate + NADH + H(+). The enzyme catalyses L-proline + NADP(+) = 1-pyrroline-2-carboxylate + NADPH + H(+). It carries out the reaction L-proline + NAD(+) = 1-pyrroline-2-carboxylate + NADH + H(+). The catalysed reaction is (3R)-1,4-thiomorpholine-3-carboxylate + NAD(+) = 3,4-dehydrothiomorpholine-3-carboxylate + NADH + 2 H(+). It catalyses the reaction (3R)-1,4-thiomorpholine-3-carboxylate + NADP(+) = 3,4-dehydrothiomorpholine-3-carboxylate + NADPH + 2 H(+). The enzyme catalyses (S)-cystathionine ketimine + NADH + 2 H(+) = (3R,5S)-2,3,5,6,7-pentahydro-1,4-thiazepine-3,5-dicarboxylate + NAD(+). It carries out the reaction (S)-cystathionine ketimine + NADPH + 2 H(+) = (3R,5S)-2,3,5,6,7-pentahydro-1,4-thiazepine-3,5-dicarboxylate + NADP(+). The catalysed reaction is (R)-lanthionine ketimine + NADPH + 2 H(+) = (3R,5R)-1,4-thiomorpholine-3,5-dicarboxylate + NADP(+). It catalyses the reaction Delta(2)-thiazoline-2-carboxylate + NADPH + 2 H(+) = L-thiazolidine-2-carboxylate + NADP(+). With respect to regulation, inhibited by thyroid hormones triiodothyronine (T3) and thyroxine (T4). Functionally, catalyzes the NAD(P)H-dependent reduction of imine double bonds of a number of cyclic ketimine substrates, including sulfur-containing cyclic ketimines. Under physiological conditions, it efficiently catalyzes delta(1)-piperideine-2-carboxylate (P2C) and delta(1)-pyrroline-2-carboxylate (Pyr2C) reduction, suggesting a central role in lysine and glutamate metabolism. Additional substrates are delta(2)-thiazoline-2-carboxylate (T2C), 3,4-dehydrothiomorpholine-3-carboxylate (AECK), and (R)-lanthionine ketimine (LK) that is reduced at very low rate compared to other substrates. Also catalyzes the NAD(P)H-dependent reduction of (S)-cystathionine ketimine (CysK). This is Ketimine reductase mu-crystallin from Homo sapiens (Human).